A 437-amino-acid chain; its full sequence is Histidine--tRNA ligase (437 aa).

It belongs to the class-II aminoacyl-tRNA synthetase family. In terms of assembly, homodimer.

It localises to the cytoplasm. The enzyme catalyses tRNA(His) + L-histidine + ATP = L-histidyl-tRNA(His) + AMP + diphosphate + H(+). This Leptospira biflexa serovar Patoc (strain Patoc 1 / Ames) protein is Histidine--tRNA ligase.